Consider the following 362-residue polypeptide: Heat-inducible transcription repressor HrcA (362 aa).

It belongs to the HrcA family.

Functionally, negative regulator of class I heat shock genes (grpE-dnaK-dnaJ and groELS operons). Prevents heat-shock induction of these operons. The polypeptide is Heat-inducible transcription repressor HrcA (Rhizobium leguminosarum bv. trifolii (strain WSM2304)).